Consider the following 485-residue polypeptide: GTPase Der (485 aa).

2 EngA-type G domains span residues 3-167 (PTIA…PEPE) and 176-349 (PVFA…NAAM). Residues 9–16 (GRPNVGKS), 56–60 (DTGGF), 119–122 (NKGE), 182–189 (GRPNVGKS), 229–233 (DTAGV), and 294–297 (NKWD) each bind GTP. Residues 350-434 (IKMPTPKITR…PLRIQYNVSE (85 aa)) enclose the KH-like domain. The interval 435 to 485 (NPYENADDKPKKKPLRRVSLSNRIEKREGRKEEKNRFKKKTKVSVKKQFSK) is disordered. Over residues 457-469 (RIEKREGRKEEKN) the composition is skewed to basic and acidic residues. Residues 470–485 (RFKKKTKVSVKKQFSK) show a composition bias toward basic residues.

This sequence belongs to the TRAFAC class TrmE-Era-EngA-EngB-Septin-like GTPase superfamily. EngA (Der) GTPase family. Associates with the 50S ribosomal subunit.

GTPase that plays an essential role in the late steps of ribosome biogenesis. The protein is GTPase Der of Neisseria meningitidis serogroup A / serotype 4A (strain DSM 15465 / Z2491).